The chain runs to 459 residues: Putrescine aminotransferase (459 aa).

Pyridoxal 5'-phosphate contacts are provided by residues 150–151 (GT) and Q274. At K300 the chain carries N6-(pyridoxal phosphate)lysine. T332 is a binding site for pyridoxal 5'-phosphate.

This sequence belongs to the class-III pyridoxal-phosphate-dependent aminotransferase family. Putrescine aminotransferase subfamily. The cofactor is pyridoxal 5'-phosphate.

It catalyses the reaction an alkane-alpha,omega-diamine + 2-oxoglutarate = an omega-aminoaldehyde + L-glutamate. The enzyme catalyses putrescine + 2-oxoglutarate = 1-pyrroline + L-glutamate + H2O. The catalysed reaction is cadaverine + 2-oxoglutarate = 5-aminopentanal + L-glutamate. The protein operates within amine and polyamine degradation; putrescine degradation; 4-aminobutanal from putrescine (transaminase route): step 1/1. Functionally, catalyzes the aminotransferase reaction from putrescine to 2-oxoglutarate, leading to glutamate and 4-aminobutanal, which spontaneously cyclizes to form 1-pyrroline. This is the first step in one of two pathways for putrescine degradation, where putrescine is converted into 4-aminobutanoate (gamma-aminobutyrate or GABA) via 4-aminobutanal. Also functions as a cadaverine transaminase in a a L-lysine degradation pathway to succinate that proceeds via cadaverine, glutarate and L-2-hydroxyglutarate. This chain is Putrescine aminotransferase, found in Shigella boydii serotype 4 (strain Sb227).